We begin with the raw amino-acid sequence, 629 residues long: Citrate (Re)-synthase (629 aa).

The region spanning 59–329 is the Pyruvate carboxyltransferase domain; that stretch reads IFITDTTFRD…TNGIDTTVIT (271 aa). The 105-residue stretch at 497-601 folds into the Cache domain; it reads VMQRFIEEYP…GVDIRVEDLV (105 aa).

This sequence belongs to the alpha-IPM synthase/homocitrate synthase family. In terms of assembly, homotetramer. Co(2+) serves as cofactor. Requires Mn(2+) as cofactor.

The enzyme catalyses oxaloacetate + acetyl-CoA + H2O = citrate + CoA + H(+). Its activity is regulated as follows. Inhibited by p-hydroxymercuribenzoate and EDTA. Catalyzes the condensation of the acetyl group of acetyl-CoA with oxaloacetate to form citrate. This is Citrate (Re)-synthase from Syntrophus aciditrophicus (strain SB).